Consider the following 623-residue polypeptide: Peptide transporter PTR2 (623 aa).

Disordered regions lie at residues 1-20 (MVSSDFENEKQPDVVQVLTD) and 31-58 (DYEDPKNYSTNYVDDYNPKGLRRPTPQE). 11 consecutive transmembrane segments (helical) span residues 134-154 (ALTNLLTFLAYVFPLIGGYLG), 163-183 (AIQWGVFFGFVAHLFFIFASI), 191-211 (NAGLGLCVIAIITLSAGSGLM), 250-270 (ITNVFYLAINIGAFLQIATSY), 277-297 (FWLAFFVPMILYIIVPIFLFI), 385-405 (IIFNLADSGLGSVETSLIGAM), 418-438 (FNPLTIIILIPILEYGLYPLL), 448-468 (IWRICFGFVVCSFSQIAGFVL), 499-519 (LFILAAAGECWAYTTAYELAY), 529-549 (LVYALFLVMSAFSAALSLAIT), and 557-577 (LHWVFLAIGLAGFLCAIVMLA).

It belongs to the major facilitator superfamily. Proton-dependent oligopeptide transporter (POT/PTR) (TC 2.A.17) family.

The protein resides in the membrane. In terms of biological role, uptake of small peptides. This Candida albicans (Yeast) protein is Peptide transporter PTR2 (PTR2).